The sequence spans 500 residues: MSDLPWLTIIVILPISAGSSIPLFPHRGNNIIRWYTLGICLLEFLLMTYTFRYHFHFDDPLIQLEEDYDWIDLIDLHWRLGIDGLSIGPISLTSFVTTLATLAAWPVTRNPRLFYFLMLAMYSGQVGLFASRDILLFFLMWELELIPVYLLISMWGGKRRLYSATKFILYTAGGSIFISMGASSMGLYGFDGPTLDFEILANKYYPVVLEIVFYLGFFIAHAIKLPILPLHTWLPDTHGEAHYSTCMLLAGIPLKMGGYGLIRINMELLPHAHSLFSPWLVIVGAVQIIYAALTSLSQRNLKRRIAYSSVSHMGFVIVGIGSMADTSLNGAILQMISHGLIGAALFFLAGTSYDGIRTLFLDGIGGMAIPMSKISTMFSSFSMASLALPGMSGFVAESMVLLGIITSRKYSLTFQIVIAAIMAIGMILTPIHLLSMLRRMFYGYKFLNVLNPYLKDSGPREIFISICLFLPVIGTGTYPDLVLSLWDKKVEAIMFRSFHE.

The next 15 membrane-spanning stretches (helical) occupy residues 4 to 24 (LPWL…IPLF), 31 to 51 (IIRW…TYTF), 87 to 107 (IGPI…AWPV), 111 to 131 (PRLF…LFAS), 134 to 154 (ILLF…LISM), 167 to 187 (FILY…SMGL), 207 to 227 (VVLE…KLPI), 242 to 262 (HYST…YGLI), 274 to 294 (SLFS…AALT), 305 to 325 (IAYS…SMAD), 330 to 350 (GAIL…FLAG), 358 to 378 (TLFL…STMF), 386 to 406 (LALP…GIIT), 416 to 436 (IVIA…LLSM), and 462 to 482 (IFIS…PDLV).

The protein belongs to the complex I subunit 4 family.

The protein resides in the plastid. It localises to the chloroplast thylakoid membrane. It catalyses the reaction a plastoquinone + NADH + (n+1) H(+)(in) = a plastoquinol + NAD(+) + n H(+)(out). The enzyme catalyses a plastoquinone + NADPH + (n+1) H(+)(in) = a plastoquinol + NADP(+) + n H(+)(out). In Cycas taitungensis (Prince sago), this protein is NAD(P)H-quinone oxidoreductase chain 4, chloroplastic.